Reading from the N-terminus, the 150-residue chain is 3-dehydroquinate dehydratase (150 aa).

Y22 (proton acceptor) is an active-site residue. Residues N73, H79, and D86 each coordinate substrate. Residue H99 is the Proton donor of the active site. Substrate is bound by residues 100-101 and R110; that span reads LS.

It belongs to the type-II 3-dehydroquinase family. Homododecamer.

The catalysed reaction is 3-dehydroquinate = 3-dehydroshikimate + H2O. The protein operates within metabolic intermediate biosynthesis; chorismate biosynthesis; chorismate from D-erythrose 4-phosphate and phosphoenolpyruvate: step 3/7. Its function is as follows. Catalyzes a trans-dehydration via an enolate intermediate. The protein is 3-dehydroquinate dehydratase of Dinoroseobacter shibae (strain DSM 16493 / NCIMB 14021 / DFL 12).